The primary structure comprises 215 residues: Pyrrolidone-carboxylate peptidase (215 aa).

Residues Glu80, Cys143, and His167 contribute to the active site.

The protein belongs to the peptidase C15 family. Homotetramer.

It is found in the cytoplasm. The enzyme catalyses Release of an N-terminal pyroglutamyl group from a polypeptide, the second amino acid generally not being Pro.. Its function is as follows. Removes 5-oxoproline from various penultimate amino acid residues except L-proline. The polypeptide is Pyrrolidone-carboxylate peptidase (Bacillus cereus (strain 03BB102)).